The chain runs to 339 residues: Ketol-acid reductoisomerase (NADP(+)) (339 aa).

Positions 1–182 (MRVYYDRDAD…GGGRAGIIET (182 aa)) constitute a KARI N-terminal Rossmann domain. Residues 24-27 (YGSQ), R48, S51, T53, and 83-86 (DELQ) each bind NADP(+). H108 is an active-site residue. Residue G134 coordinates NADP(+). The KARI C-terminal knotted domain occupies 183-328 (SFKEECETDL…AKLREMMPWI (146 aa)). Mg(2+) is bound by residues D191, E195, E227, and E231. S252 contacts substrate.

This sequence belongs to the ketol-acid reductoisomerase family. Mg(2+) serves as cofactor.

The catalysed reaction is (2R)-2,3-dihydroxy-3-methylbutanoate + NADP(+) = (2S)-2-acetolactate + NADPH + H(+). The enzyme catalyses (2R,3R)-2,3-dihydroxy-3-methylpentanoate + NADP(+) = (S)-2-ethyl-2-hydroxy-3-oxobutanoate + NADPH + H(+). Its pathway is amino-acid biosynthesis; L-isoleucine biosynthesis; L-isoleucine from 2-oxobutanoate: step 2/4. It functions in the pathway amino-acid biosynthesis; L-valine biosynthesis; L-valine from pyruvate: step 2/4. Involved in the biosynthesis of branched-chain amino acids (BCAA). Catalyzes an alkyl-migration followed by a ketol-acid reduction of (S)-2-acetolactate (S2AL) to yield (R)-2,3-dihydroxy-isovalerate. In the isomerase reaction, S2AL is rearranged via a Mg-dependent methyl migration to produce 3-hydroxy-3-methyl-2-ketobutyrate (HMKB). In the reductase reaction, this 2-ketoacid undergoes a metal-dependent reduction by NADPH to yield (R)-2,3-dihydroxy-isovalerate. This chain is Ketol-acid reductoisomerase (NADP(+)), found in Rhodopseudomonas palustris (strain BisB5).